The following is a 224-amino-acid chain: Adenosylcobinamide-GDP ribazoletransferase (224 aa).

4 consecutive transmembrane segments (helical) span residues 21 to 41 (LSFK…AAIP), 44 to 64 (LLYL…ATGL), 97 to 117 (GGIF…HSPL), and 156 to 176 (WPAA…TTAV).

The protein belongs to the CobS family. Requires Mg(2+) as cofactor.

It localises to the cell membrane. It catalyses the reaction alpha-ribazole + adenosylcob(III)inamide-GDP = adenosylcob(III)alamin + GMP + H(+). The enzyme catalyses alpha-ribazole 5'-phosphate + adenosylcob(III)inamide-GDP = adenosylcob(III)alamin 5'-phosphate + GMP + H(+). It functions in the pathway cofactor biosynthesis; adenosylcobalamin biosynthesis; adenosylcobalamin from cob(II)yrinate a,c-diamide: step 7/7. Joins adenosylcobinamide-GDP and alpha-ribazole to generate adenosylcobalamin (Ado-cobalamin). Also synthesizes adenosylcobalamin 5'-phosphate from adenosylcobinamide-GDP and alpha-ribazole 5'-phosphate. In Pyrobaculum aerophilum (strain ATCC 51768 / DSM 7523 / JCM 9630 / CIP 104966 / NBRC 100827 / IM2), this protein is Adenosylcobinamide-GDP ribazoletransferase.